Reading from the N-terminus, the 374-residue chain is Chaperone protein DnaJ (374 aa).

The J domain occupies 5 to 70; sequence DYYEVLGVER…SKRAAFDQYG (66 aa). The segment at 133 to 211 adopts a CR-type zinc-finger fold; it reads GTTVSIRVPT…CHGEGRVEEY (79 aa). Zn(2+) contacts are provided by Cys146, Cys149, Cys163, Cys166, Cys185, Cys188, Cys199, and Cys202. CXXCXGXG motif repeat units lie at residues 146-153, 163-170, 185-192, and 199-206; these read CQPCDGSG, CPTCGGIG, CPRCHGQG, and CTSCHGEG.

It belongs to the DnaJ family. Homodimer. It depends on Zn(2+) as a cofactor.

It localises to the cytoplasm. Its function is as follows. Participates actively in the response to hyperosmotic and heat shock by preventing the aggregation of stress-denatured proteins and by disaggregating proteins, also in an autonomous, DnaK-independent fashion. Unfolded proteins bind initially to DnaJ; upon interaction with the DnaJ-bound protein, DnaK hydrolyzes its bound ATP, resulting in the formation of a stable complex. GrpE releases ADP from DnaK; ATP binding to DnaK triggers the release of the substrate protein, thus completing the reaction cycle. Several rounds of ATP-dependent interactions between DnaJ, DnaK and GrpE are required for fully efficient folding. Also involved, together with DnaK and GrpE, in the DNA replication of plasmids through activation of initiation proteins. The protein is Chaperone protein DnaJ of Pseudomonas putida (strain ATCC 700007 / DSM 6899 / JCM 31910 / BCRC 17059 / LMG 24140 / F1).